Reading from the N-terminus, the 488-residue chain is GTPase Der (488 aa).

EngA-type G domains are found at residues 3–166 (PVIA…PRDP) and 193–366 (IKIA…MSAV). GTP is bound by residues 9 to 16 (GRPNVGKS), 56 to 60 (DTGGI), 118 to 121 (NKID), 199 to 206 (GRPNVGKS), 246 to 250 (DTAGV), and 311 to 314 (NKWD). The KH-like domain maps to 367 to 451 (TRWPTSRLTQ…PIRIEYKGGD (85 aa)). Residues 449-461 (GGDNPFEGKKNTL) are compositionally biased toward basic and acidic residues. A disordered region spans residues 449–488 (GGDNPFEGKKNTLTDRQVNKKRRLMSHHKKAEKKRRDKRK). Basic residues predominate over residues 467–488 (NKKRRLMSHHKKAEKKRRDKRK).

The protein belongs to the TRAFAC class TrmE-Era-EngA-EngB-Septin-like GTPase superfamily. EngA (Der) GTPase family. In terms of assembly, associates with the 50S ribosomal subunit.

GTPase that plays an essential role in the late steps of ribosome biogenesis. The polypeptide is GTPase Der (Pseudomonas entomophila (strain L48)).